The following is a 1915-amino-acid chain: Ankyrin repeat domain-containing protein 36A (1915 aa).

ANK repeat units follow at residues 31-60, 64-93, 97-126, 130-159, 163-192, and 196-225; these read YHLK…DANK, KERT…ELNL, EDRT…NPNI, FGRT…NIEE, CEYQ…NVNA, and LGRS…DVLS. Disordered stretches follow at residues 261–331, 470–619, 639–663, 676–1203, and 1285–1304; these read PINS…DEQK, ATGQ…QKQS, MGGG…DKTD, LQCG…KATS, and KDVQ…SEGE. Composition is skewed to polar residues over residues 262-272 and 297-306; these read INSNPVSSQKQ and KSGTVSSQKQ. Low complexity predominate over residues 505–521; the sequence is SLTSSEESSERPPLSTL. Composition is skewed to basic and acidic residues over residues 551–562 and 585–596; these read PAEKATSDDKDS and PAEKATSDEKDS. 2 stretches are compositionally biased toward polar residues: residues 597–619 and 645–657; these read VSNI…QKQS and GTVS…ASKA. Basic and acidic residues-rich tracts occupy residues 806 to 815, 874 to 883, 931 to 951, 976 to 985, 1044 to 1053, 1100 to 1121, and 1134 to 1152; these read RENKDGEKSR, SDEK…EISR, TSDE…EKSR, and ICDK…KDEQ. Over residues 1175–1196 the composition is skewed to polar residues; that stretch reads VSNIPTEIKDGQQSGTVSSQKQ. 4 coiled-coil regions span residues 1383 to 1466, 1504 to 1531, 1573 to 1614, and 1727 to 1814; these read IKLK…TEEQ, KEDL…IKNQ, LAAL…ARCD, and NMLL…KRDD. The disordered stretch occupies residues 1489-1508; the sequence is KTGGNNSNQVSETDEKEDLL.

The protein belongs to the ANKRD36 family.

The polypeptide is Ankyrin repeat domain-containing protein 36A (ANKRD36) (Homo sapiens (Human)).